The chain runs to 369 residues: Glutamate 5-kinase (369 aa).

K9 contacts ATP. Substrate contacts are provided by S49, D136, and N148. ATP is bound by residues T168 to D169 and T210 to K216. The PUA domain maps to R275–W355.

It belongs to the glutamate 5-kinase family.

The protein resides in the cytoplasm. It catalyses the reaction L-glutamate + ATP = L-glutamyl 5-phosphate + ADP. The protein operates within amino-acid biosynthesis; L-proline biosynthesis; L-glutamate 5-semialdehyde from L-glutamate: step 1/2. In terms of biological role, catalyzes the transfer of a phosphate group to glutamate to form L-glutamate 5-phosphate. The chain is Glutamate 5-kinase from Neisseria meningitidis serogroup B (strain ATCC BAA-335 / MC58).